Reading from the N-terminus, the 628-residue chain is MAAETDTTLPELRETVASLPTGPGIYQFKNSAGKVIYVGKAKNIRSRVRSYFRDPRQLTGKTQVLVGHITDLEIIITSSEVEALILENNLIKELKPRYNVNLKDDKTYPWLVITGEPFPRVFISRNRTRDKSTWFGPYTEAGQLRSILELIGSIFPVRSCRYSLTPENIAAKKHKLCLDYHIGKCKGPCEGLQNEAEYLEMIGEIVRLLKGRTAGLLKELHEKMLTAAAELRFEEAAELKMQLQSLRRYADRQKMVAADGMDRDVSAIASGDDEACGVVFRIREGKMLGARHFILTNTAGEPEKKLLGKVLEGYYLKSPEAMPEEVLLSAQLDLEDTESLQALSREREEECPTRRKAVKFTVPQIGEKAHLVEMCRQNARHHLAEYLVQKQKRGEAAREHYGVKALGESLHLETPPKRIECFDNSHLQGTDYVSSMVCFVNGKPLKSAYRKFRLQSLEEACGTGSSDDYAAMEQVLGRRYGGSLQDELPLPDLIVVDGGKGQANSAKKVLDRLGITVPVIGLAKRLEEVFTPDADGPFNLPKTSPALKLLQQLRDEAHRFAITYHRNIRSKRTLETGLTTIPGVGEKIAFALLERFGSVDGVAAASAEELSQFAGKVKGMSIFRHYHP.

The region spanning 21–100 (TGPGIYQFKN…IKELKPRYNV (80 aa)) is the GIY-YIG domain. The UVR domain occupies 214 to 249 (AGLLKELHEKMLTAAAELRFEEAAELKMQLQSLRRY).

This sequence belongs to the UvrC family. In terms of assembly, interacts with UvrB in an incision complex.

It localises to the cytoplasm. In terms of biological role, the UvrABC repair system catalyzes the recognition and processing of DNA lesions. UvrC both incises the 5' and 3' sides of the lesion. The N-terminal half is responsible for the 3' incision and the C-terminal half is responsible for the 5' incision. The chain is UvrABC system protein C from Chlorobium luteolum (strain DSM 273 / BCRC 81028 / 2530) (Pelodictyon luteolum).